Consider the following 44-residue polypeptide: Thymosin beta-4 (44 aa).

Positions 1–25 (MSDKPDMAEIEKFDKSKLKKTETQE) are enriched in basic and acidic residues. Residues 1 to 44 (MSDKPDMAEIEKFDKSKLKKTETQEKNPLPSKETIEQEKQAGES) form a disordered region. At S2 the chain carries N-acetylserine. Residue S2 is modified to Phosphoserine. At K4 the chain carries N6-acetyllysine. At K12 the chain carries N6-acetyllysine; alternate. K12 participates in a covalent cross-link: Glycyl lysine isopeptide (Lys-Gly) (interchain with G-Cter in SUMO2); alternate. A Phosphothreonine modification is found at T23. The residue at position 26 (K26) is an N6-acetyllysine. Position 31 is a phosphoserine (S31). Position 32 is an N6-acetyllysine (K32). Over residues 33-44 (ETIEQEKQAGES) the composition is skewed to basic and acidic residues. T34 is modified (phosphothreonine). Position 39 is an N6-acetyllysine (K39).

The protein belongs to the thymosin beta family. As to quaternary structure, identified in a complex composed of ACTA1, COBL, GSN AND TMSB4X. Interacts with SERPINB1. In terms of processing, acSDKP is inactivated by ACE, which removes the dipeptide Lys-Pro from its C-terminus.

It is found in the cytoplasm. The protein resides in the cytoskeleton. Plays an important role in the organization of the cytoskeleton. Binds to and sequesters actin monomers (G actin) and therefore inhibits actin polymerization. In terms of biological role, potent inhibitor of bone marrow derived stem cell differentiation. Acts by inhibits the entry of hematopoietic pluripotent stem cells into the S-phase. The polypeptide is Thymosin beta-4 (TMSB4) (Bos taurus (Bovine)).